Consider the following 75-residue polypeptide: MKNTINIQDQFLNQLRKEGIQVTVFLLNGFQLRGYIKGFDNFTVLLEVQGKQQLIYKHAISTFAPERNIHFETEQ.

Residues 9 to 69 (DQFLNQLRKE…ISTFAPERNI (61 aa)) enclose the Sm domain.

The protein belongs to the Hfq family. As to quaternary structure, homohexamer.

In terms of biological role, RNA chaperone that binds small regulatory RNA (sRNAs) and mRNAs to facilitate mRNA translational regulation in response to envelope stress, environmental stress and changes in metabolite concentrations. Also binds with high specificity to tRNAs. The sequence is that of RNA-binding protein Hfq from Geobacillus kaustophilus (strain HTA426).